The chain runs to 377 residues: Putative glutamate--cysteine ligase 2 (377 aa).

Belongs to the glutamate--cysteine ligase type 2 family. YbdK subfamily.

It catalyses the reaction L-cysteine + L-glutamate + ATP = gamma-L-glutamyl-L-cysteine + ADP + phosphate + H(+). ATP-dependent carboxylate-amine ligase which exhibits weak glutamate--cysteine ligase activity. This is Putative glutamate--cysteine ligase 2 from Ralstonia pickettii (strain 12J).